Consider the following 471-residue polypeptide: Plasmepsin VII (471 aa).

The first 24 residues, 1–24, serve as a signal peptide directing secretion; sequence MKSVYHHFAIIFFLKLFLCNCILS. One can recognise a Peptidase A1 domain in the interval 96-438; that stretch reads YYGKIAIGEN…DKDNLQIGFV (343 aa). Active-site residues include Asp115 and Asp325.

Belongs to the peptidase A1 family.

Its subcellular location is the cytoplasm. The sequence is that of Plasmepsin VII from Plasmodium berghei (strain Anka).